Consider the following 318-residue polypeptide: Retinol dehydrogenase 11 (318 aa).

Residues 1-21 (MVELMFPLLLLLLPFLLYMAA) traverse the membrane as a helical; Signal-anchor for type II membrane protein segment. The Cytoplasmic portion of the chain corresponds to 22 to 318 (PQIRKMLSSG…SCDLLGLPID (297 aa)). 48–54 (GANTGIG) contributes to the NADP(+) binding site. Residue K112 is modified to N6-acetyllysine. S177 provides a ligand contact to substrate. Y202 functions as the Proton acceptor in the catalytic mechanism.

It belongs to the short-chain dehydrogenases/reductases (SDR) family. As to quaternary structure, interacts with SELENOF. Not glycosylated. In terms of tissue distribution, predominantly expressed in the epithelial cells of prostate, in both basal and luminal secretory cell populations. Expressed at low levels in spleen, thymus, testis, ovary, small intestine, colon, peripherical blood leukocytes, kidney, adrenal gland and fetal liver. Not detected in prostatic fibromuscular stromal cells, endothelial cells, or infiltrating lymphocytes.

It is found in the endoplasmic reticulum membrane. The catalysed reaction is all-trans-retinol + NADP(+) = all-trans-retinal + NADPH + H(+). It carries out the reaction 11-cis-retinol + NADP(+) = 11-cis-retinal + NADPH + H(+). It catalyses the reaction 9-cis-retinol + NADP(+) = 9-cis-retinal + NADPH + H(+). The enzyme catalyses 13-cis-retinol + NADP(+) = 13-cis-retinal + NADPH + H(+). Its pathway is cofactor metabolism; retinol metabolism. SELENOF decreases the retinol dehydrogenase activity. Functionally, retinol dehydrogenase with a clear preference for NADP. Displays high activity towards 9-cis, 11-cis and all-trans-retinol, and to a lesser extent on 13-cis-retinol. Exhibits a low reductive activity towards unsaturated medium-chain aldehydes such as cis -6-nonenal and no activity toward nonanal or 4-hydroxy-nonenal. Has no dehydrogenase activity towards steroid. The chain is Retinol dehydrogenase 11 (RDH11) from Homo sapiens (Human).